A 73-amino-acid polypeptide reads, in one-letter code: Metallothionein (73 aa).

Residues Cys-15, Cys-20, Cys-26, Cys-28, Cys-32, Cys-34, Cys-39, Cys-46, Cys-48, Cys-52, Cys-54, Cys-58, Cys-64, Cys-66, Cys-70, and Cys-72 each coordinate Cd(2+).

The protein belongs to the metallothionein superfamily. Type 2 family.

Its function is as follows. The metallothioneins are involved in the cellular sequestration of toxic metal ions. This is Metallothionein from Dreissena polymorpha (Zebra mussel).